Consider the following 1190-residue polypeptide: DNA-directed RNA polymerase subunit beta (1190 aa).

Belongs to the RNA polymerase beta chain family. In terms of assembly, the RNAP catalytic core consists of 2 alpha, 1 beta, 1 beta' and 1 omega subunit. When a sigma factor is associated with the core the holoenzyme is formed, which can initiate transcription.

It catalyses the reaction RNA(n) + a ribonucleoside 5'-triphosphate = RNA(n+1) + diphosphate. Its function is as follows. DNA-dependent RNA polymerase catalyzes the transcription of DNA into RNA using the four ribonucleoside triphosphates as substrates. This chain is DNA-directed RNA polymerase subunit beta, found in Geobacillus thermodenitrificans (strain NG80-2).